The primary structure comprises 942 residues: AP-1 complex subunit beta (942 aa).

HEAT repeat units follow at residues 45-82 (KDVSMLFTHVLNCMQTHNLELKKLVYLYVMNYAKNHPD), 117-154 (NITEHLCEPLRHALKDQDPYVRKTAAVCVAKLYDVNPE), 156-193 (VENQGFLNILNDLLGDSNPMVVANAVASLTEIDEVSKK), 273-313 (DVIR…KRPE), 384-421 (RASERCIQVLLDLIQTKVNYVVQEAIIVIKDIFRKYPN), and 458-495 (DNAHELLNSFLEGFKDENSQVQLQLLTSIVKLFLKRPK). A disordered region spans residues 590–700 (GLRNKEEEDE…NDLSFLGGGG (111 aa)). The segment covering 596–609 (EEDEEEPDYVDDDN) has biased composition (acidic residues). Low complexity-rich tracts occupy residues 613–645 (QQGGQQQQGGYQQQQQQQQQGGYQQQQPQQQQP) and 664–677 (NNNNNNYGNNNNNN). Polar residues predominate over residues 678-693 (MYSPQPQQFNGNSNDL).

The protein belongs to the adaptor complexes large subunit family. In terms of assembly, adaptor protein complex 1 (AP-1) is a heterotetramer composed of two large adaptins (gamma-type subunit and beta-type subunit), a medium adaptin (mu-type subunit) and a small adaptin (sigma-type subunit).

The protein localises to the golgi apparatus. It localises to the trans-Golgi network. Its subcellular location is the cytoplasmic vesicle. The protein resides in the clathrin-coated vesicle membrane. Functionally, subunit of clathrin-associated adaptor protein complex 1 that plays a role in protein sorting in the trans-Golgi network (TGN) and endosomes. The AP complexes mediate the recruitment of clathrin to membranes and the recognition of sorting signals within the cytosolic tails of transmembrane cargo molecules. Also involved in early steps of phagocytosis and macropinocytosis. The chain is AP-1 complex subunit beta (ap1b1) from Dictyostelium discoideum (Social amoeba).